Here is a 187-residue protein sequence, read N- to C-terminus: Large ribosomal subunit protein uL5 (187 aa).

Belongs to the universal ribosomal protein uL5 family. Part of the 50S ribosomal subunit; part of the 5S rRNA/L5/L18/L25 subcomplex. Contacts the 5S rRNA and the P site tRNA. Forms a bridge to the 30S subunit in the 70S ribosome.

In terms of biological role, this is one of the proteins that bind and probably mediate the attachment of the 5S RNA into the large ribosomal subunit, where it forms part of the central protuberance. In the 70S ribosome it contacts protein S13 of the 30S subunit (bridge B1b), connecting the 2 subunits; this bridge is implicated in subunit movement. Contacts the P site tRNA; the 5S rRNA and some of its associated proteins might help stabilize positioning of ribosome-bound tRNAs. The chain is Large ribosomal subunit protein uL5 from Mycobacteroides abscessus (strain ATCC 19977 / DSM 44196 / CCUG 20993 / CIP 104536 / JCM 13569 / NCTC 13031 / TMC 1543 / L948) (Mycobacterium abscessus).